The sequence spans 926 residues: Alanine--tRNA ligase (926 aa).

Zn(2+) is bound by residues His577, His581, Cys680, and His684.

It belongs to the class-II aminoacyl-tRNA synthetase family. Requires Zn(2+) as cofactor.

The protein resides in the cytoplasm. The enzyme catalyses tRNA(Ala) + L-alanine + ATP = L-alanyl-tRNA(Ala) + AMP + diphosphate. In terms of biological role, catalyzes the attachment of alanine to tRNA(Ala) in a two-step reaction: alanine is first activated by ATP to form Ala-AMP and then transferred to the acceptor end of tRNA(Ala). Also edits incorrectly charged Ser-tRNA(Ala) and Gly-tRNA(Ala) via its editing domain. The sequence is that of Alanine--tRNA ligase from Methylacidiphilum infernorum (isolate V4) (Methylokorus infernorum (strain V4)).